Reading from the N-terminus, the 967-residue chain is Nonsense-mediated mRNA decay factor SMG8 (967 aa).

The tract at residues L627–S702 is disordered. The segment covering N628–S639 has biased composition (acidic residues). Residues R643–S666 are compositionally biased toward low complexity. Polar residues predominate over residues A686 to S702.

The protein belongs to the SMG8 family.

Its function is as follows. Involved in nonsense-mediated decay (NMD) of mRNAs containing premature stop codons. Probable component of kinase complex containing nonC and recruited to stalled ribosomes. The sequence is that of Nonsense-mediated mRNA decay factor SMG8 from Drosophila mojavensis (Fruit fly).